We begin with the raw amino-acid sequence, 488 residues long: Argininosuccinate lyase 2 (488 aa).

Belongs to the lyase 1 family. Argininosuccinate lyase subfamily.

It localises to the cytoplasm. The catalysed reaction is 2-(N(omega)-L-arginino)succinate = fumarate + L-arginine. The protein operates within amino-acid biosynthesis; L-arginine biosynthesis; L-arginine from L-ornithine and carbamoyl phosphate: step 3/3. The sequence is that of Argininosuccinate lyase 2 from Rhizobium meliloti (strain 1021) (Ensifer meliloti).